The sequence spans 312 residues: Glyoxylate/hydroxypyruvate reductase A (312 aa).

The active site involves Arg-227. His-275 functions as the Proton donor in the catalytic mechanism.

Belongs to the D-isomer specific 2-hydroxyacid dehydrogenase family. GhrA subfamily.

It localises to the cytoplasm. It catalyses the reaction glycolate + NADP(+) = glyoxylate + NADPH + H(+). The catalysed reaction is (R)-glycerate + NAD(+) = 3-hydroxypyruvate + NADH + H(+). The enzyme catalyses (R)-glycerate + NADP(+) = 3-hydroxypyruvate + NADPH + H(+). Functionally, catalyzes the NADPH-dependent reduction of glyoxylate and hydroxypyruvate into glycolate and glycerate, respectively. The chain is Glyoxylate/hydroxypyruvate reductase A from Salmonella enteritidis PT4 (strain P125109).